Consider the following 758-residue polypeptide: 5-methyltetrahydropteroyltriglutamate--homocysteine methyltransferase (758 aa).

5-methyltetrahydropteroyltri-L-glutamate-binding positions include 16–19 (RELK) and Lys112. Residues 433–435 (IGS) and Glu486 contribute to the L-homocysteine site. Residues 433–435 (IGS) and Glu486 contribute to the L-methionine site. Residues 517–518 (RC) and Trp563 contribute to the 5-methyltetrahydropteroyltri-L-glutamate site. Asp601 is a binding site for L-homocysteine. Residue Asp601 coordinates L-methionine. Residue Glu607 participates in 5-methyltetrahydropteroyltri-L-glutamate binding. His643, Cys645, and Glu667 together coordinate Zn(2+). The active-site Proton donor is the His696. Residue Cys728 participates in Zn(2+) binding.

This sequence belongs to the vitamin-B12 independent methionine synthase family. Requires Zn(2+) as cofactor.

The catalysed reaction is 5-methyltetrahydropteroyltri-L-glutamate + L-homocysteine = tetrahydropteroyltri-L-glutamate + L-methionine. Its pathway is amino-acid biosynthesis; L-methionine biosynthesis via de novo pathway; L-methionine from L-homocysteine (MetE route): step 1/1. In terms of biological role, catalyzes the transfer of a methyl group from 5-methyltetrahydrofolate to homocysteine resulting in methionine formation. The chain is 5-methyltetrahydropteroyltriglutamate--homocysteine methyltransferase from Neisseria meningitidis serogroup C / serotype 2a (strain ATCC 700532 / DSM 15464 / FAM18).